The following is a 344-amino-acid chain: RNA 3'-terminal phosphate cyclase (344 aa).

ATP contacts are provided by residues Gln-103 and 283–287; that span reads HLADQ. The active-site Tele-AMP-histidine intermediate is the His-308.

Belongs to the RNA 3'-terminal cyclase family. Type 1 subfamily.

Its subcellular location is the cytoplasm. It catalyses the reaction a 3'-end 3'-phospho-ribonucleotide-RNA + ATP = a 3'-end 2',3'-cyclophospho-ribonucleotide-RNA + AMP + diphosphate. In terms of biological role, catalyzes the conversion of 3'-phosphate to a 2',3'-cyclic phosphodiester at the end of RNA. The mechanism of action of the enzyme occurs in 3 steps: (A) adenylation of the enzyme by ATP; (B) transfer of adenylate to an RNA-N3'P to produce RNA-N3'PP5'A; (C) and attack of the adjacent 2'-hydroxyl on the 3'-phosphorus in the diester linkage to produce the cyclic end product. The biological role of this enzyme is unknown but it is likely to function in some aspects of cellular RNA processing. The chain is RNA 3'-terminal phosphate cyclase from Salmonella agona (strain SL483).